Here is a 711-residue protein sequence, read N- to C-terminus: 1,4-alpha-glucan-branching enzyme (711 aa).

Residues W98 and K135 each coordinate (1,4-alpha-D-glucosyl)n. The Nucleophile role is filled by D353. E414 (proton donor) is an active-site residue.

Belongs to the glycosyl hydrolase 13 family. GlgB subfamily.

It localises to the cytoplasm. It carries out the reaction Transfers a segment of a (1-&gt;4)-alpha-D-glucan chain to a primary hydroxy group in a similar glucan chain.. It functions in the pathway glycan biosynthesis; glycogen biosynthesis. In terms of biological role, glycogen-branching enzyme participates in the glycogen biosynthetic process along with glycogenin and glycogen synthase. Generates alpha-1,6-glucosidic branches from alpha-1,4-linked glucose chains, to increase solubility of the glycogen polymer. This chain is 1,4-alpha-glucan-branching enzyme (GLC3), found in Debaryomyces hansenii (strain ATCC 36239 / CBS 767 / BCRC 21394 / JCM 1990 / NBRC 0083 / IGC 2968) (Yeast).